A 150-amino-acid polypeptide reads, in one-letter code: MSTLEQKLTEMITAPVEALGYELVGIEFIRGRTSTLRIYIDSEDGINVDDCADVSHQVSAVLDVEDPISVAYNLEVSSPGLDRPMFTADHYARFQGEEVALVLRMAVQNRRKWQGIIKAVDGEMITVTVEGKDEVFALSNIQKANLVPHF.

Belongs to the RimP family.

It is found in the cytoplasm. Its function is as follows. Required for maturation of 30S ribosomal subunits. The polypeptide is Ribosome maturation factor RimP (Salmonella dublin (strain CT_02021853)).